Here is a 295-residue protein sequence, read N- to C-terminus: Fructose-bisphosphate aldolase class 1 (295 aa).

Glutamate 176 acts as the Proton acceptor in catalysis. Lysine 213 serves as the catalytic Schiff-base intermediate with dihydroxyacetone-P.

The protein belongs to the class I fructose-bisphosphate aldolase family.

The enzyme catalyses beta-D-fructose 1,6-bisphosphate = D-glyceraldehyde 3-phosphate + dihydroxyacetone phosphate. The protein operates within carbohydrate degradation; glycolysis; D-glyceraldehyde 3-phosphate and glycerone phosphate from D-glucose: step 4/4. This chain is Fructose-bisphosphate aldolase class 1, found in Fusobacterium nucleatum subsp. nucleatum (strain ATCC 25586 / DSM 15643 / BCRC 10681 / CIP 101130 / JCM 8532 / KCTC 2640 / LMG 13131 / VPI 4355).